Consider the following 497-residue polypeptide: Di-/tripeptide transporter (497 aa).

Residues 1 to 36 (MQNLNKTEKTFFGQPRGLLTLFQTEFWERFSYYGMR) lie on the Cytoplasmic side of the membrane. A helical membrane pass occupies residues 37–55 (AILVYYLYALTTADNAGLG). The Extracellular segment spans residues 56–64 (LPKAQAMAI). A helical transmembrane segment spans residues 65 to 83 (VSIYGALVYLSTIVGGWVA). Residues 84–92 (DRLLGASRT) lie on the Cytoplasmic side of the membrane. Residues 93–111 (IFLGGILITLGHIALATPF) form a helical membrane-spanning segment. Residues 112–115 (GLSS) lie on the Extracellular side of the membrane. A helical transmembrane segment spans residues 116–134 (LFVALFLIILGTGMLKPNI). Topologically, residues 135–154 (SNMVGHLYSKDDSRRDTGFN) are cytoplasmic. The chain crosses the membrane as a helical span at residues 155 to 173 (IFVVGINMGSLIAPLIVGT). The Extracellular portion of the chain corresponds to 174 to 181 (VGQGVNYH). The chain crosses the membrane as a helical span at residues 182-200 (LGFSLAAIGMIFALFAYWY). At 201-224 (GRLRHFPEIGREPSNPMDSKARRN) the chain is on the cytoplasmic side. The helical transmembrane segment at 225–243 (FLITLTIVVIVAIIGFFLL) threads the bilayer. The Extracellular segment spans residues 244–254 (YQASPANFINN). The helical transmembrane segment at 255–273 (FINVLSIIGIVVPIIYFVM) threads the bilayer. Residues 274 to 293 (MFTSKKVESDERRKLTAYIP) are Cytoplasmic-facing. Residues 294–312 (LFLSAIVFWAIEEQSSTII) form a helical membrane-spanning segment. At 313 to 335 (AVWGESRSNLDPTWFGITFHIDP) the chain is on the extracellular side. A helical transmembrane segment spans residues 336–354 (SWYQLLNPLFIVLLSPIFV). The Cytoplasmic portion of the chain corresponds to 355-372 (RLWNKLGERQPSTIVKFG). The helical transmembrane segment at 373–391 (LGLMLTGISYLIMTLPGLL) threads the bilayer. At 392–425 (NGTSGRASALWLVLMFAVQMAGELLVSPVGLSVS) the chain is on the extracellular side. Residues 426–444 (TKLAPVAFQSQMMAMWFLA) traverse the membrane as a helical segment. Topologically, residues 445-497 (DSTSQAINAQITPLFKAATEVHFFAITGIIGIIVGIILLIVKKPILKLMGDVR) are cytoplasmic.

Belongs to the major facilitator superfamily. Proton-dependent oligopeptide transporter (POT/PTR) (TC 2.A.17) family.

It localises to the cell membrane. Functionally, proton-dependent uptake of di- or tri-peptides. The sequence is that of Di-/tripeptide transporter (dtpT) from Lactococcus lactis subsp. lactis (strain IL1403) (Streptococcus lactis).